Here is a 1608-residue protein sequence, read N- to C-terminus: Mitogen-activated protein kinase kinase kinase 4 (1608 aa).

The span at 1 to 23 shows a compositional bias: low complexity; that stretch reads MREAAAALVPPPAFAVTPAAAME. Disordered regions lie at residues 1–136 and 429–478; these read MREA…ENVE and IPSP…RQPI. The segment covering 24–37 has biased composition (pro residues); sequence EPPPPPPPPPPPPE. A compositionally biased stretch (acidic residues) spans 66-76; it reads SDLEDFSDETN. Ser-84 carries the post-translational modification Phosphoserine. The segment covering 91-101 has biased composition (basic residues); that stretch reads QMKRMSTKHQR. Phosphoserine is present on Ser-431. At Thr-447 the chain carries Phosphothreonine. Phosphoserine is present on residues Ser-456 and Ser-457. Residues 456–466 are compositionally biased toward acidic residues; that stretch reads SSTDESEEEQI. Thr-458 is modified (phosphothreonine). Phosphoserine occurs at positions 461, 481, and 499. Disordered stretches follow at residues 1157–1190, 1202–1231, and 1244–1274; these read CHSD…GSPA, ASRP…SVPE, and FRSL…TRRS. A compositionally biased stretch (polar residues) spans 1217 to 1230; sequence SISSAHDTRGSSVP. Residues Ser-1252 and Ser-1274 each carry the phosphoserine modification. The segment covering 1252-1261 has biased composition (basic and acidic residues); sequence SPTEERDEPA. Positions 1343-1601 constitute a Protein kinase domain; sequence WQRGNKIGEG…ASQLLDHSFV (259 aa). Residues 1349 to 1357 and Lys-1372 contribute to the ATP site; that span reads IGEGQYGKV. The active-site Proton acceptor is Asp-1463.

Belongs to the protein kinase superfamily. STE Ser/Thr protein kinase family. MAP kinase kinase kinase subfamily. Monomer and homodimer. Homodimerization enhances kinase activity. Interacts with TRAF4; this promotes homodimerization. Binds both upstream activators and downstream substrates in multimolecular complexes. Interacts with AXIN1 and DIXDC1; interaction with DIXDC1 prevents interaction with AXIN1. Interacts with GADD45 and MAP2K6. Interacts with ZFP36; this interaction enhances the association with SH3KBP1/CIN85. Interacts with SH3KBP1; this interaction enhances the association with ZFP36. Interacts with CDC42. Requires Mg(2+) as cofactor. In terms of tissue distribution, expressed at high levels in heart, placenta, skeletal muscle and pancreas, and at lower levels in other tissues.

It is found in the cytoplasm. The protein localises to the perinuclear region. It catalyses the reaction L-seryl-[protein] + ATP = O-phospho-L-seryl-[protein] + ADP + H(+). The catalysed reaction is L-threonyl-[protein] + ATP = O-phospho-L-threonyl-[protein] + ADP + H(+). N-terminal autoinhibitory domain interacts with the C-terminal kinase domain, inhibiting kinase activity, and preventing interaction with its substrate, MAP2K6. The GADD45 proteins activate the kinase by binding to the N-terminal domain. Activated by phosphorylation on Thr-1505. Its function is as follows. Component of a protein kinase signal transduction cascade. Activates the CSBP2, P38 and JNK MAPK pathways, but not the ERK pathway. Specifically phosphorylates and activates MAP2K4 and MAP2K6. This Homo sapiens (Human) protein is Mitogen-activated protein kinase kinase kinase 4 (MAP3K4).